The following is a 237-amino-acid chain: UPF0053 inner membrane protein YgdQ (237 aa).

Residues 1–17 are Periplasmic-facing; sequence MLFAWITDPNAWLALGT. Residues 18 to 38 traverse the membrane as a helical segment; that stretch reads LTLLEIVLGIDNIIFLSLVVA. Residues 39–50 lie on the Cytoplasmic side of the membrane; the sequence is KLPTAQRAHARR. A helical transmembrane segment spans residues 51–71; that stretch reads LGLAGAMVMRLALLASIAWVT. Over 72 to 79 the chain is Periplasmic; that stretch reads RLTNPLFT. A helical transmembrane segment spans residues 80–100; that stretch reads IFSQEISARDLILLLGGLFLI. Topologically, residues 101–124 are cytoplasmic; that stretch reads WKASKEIHESIEGEEEGLKTRVSS. A helical transmembrane segment spans residues 125–145; the sequence is FLGAIVQIMLLDIIFSLDSVI. Residues 146 to 151 are Periplasmic-facing; sequence TAVGLS. The chain crosses the membrane as a helical span at residues 152–172; that stretch reads DHLFIMMAAVVIAVGVMMFAA. Over 173-186 the chain is Cytoplasmic; it reads RSIGDFVERHPSVK. A helical transmembrane segment spans residues 187–207; it reads MLALSFLILVGFTLILESFDI. The Periplasmic portion of the chain corresponds to 208–209; it reads HV. A helical transmembrane segment spans residues 210-230; the sequence is PKGYIYFAMFFSIAVESLNLI. Residues 231–237 are Cytoplasmic-facing; that stretch reads RNKKNPL.

The protein belongs to the UPF0053 family.

The protein resides in the cell inner membrane. The polypeptide is UPF0053 inner membrane protein YgdQ (ygdQ) (Escherichia coli O157:H7).